We begin with the raw amino-acid sequence, 496 residues long: Cytochrome P450 71D181 (496 aa).

A helical; Signal-anchor for type II membrane protein transmembrane segment spans residues 1-21 (MDISILWVAIILVISSYFIFM). Cys435 provides a ligand contact to heme. Residues 471 to 496 (MSETPGLSGPRKNPLIMVPTIHNPTS) form a disordered region.

Belongs to the cytochrome P450 family. The cofactor is heme.

It localises to the membrane. It carries out the reaction gamma-terpinene + 2 reduced [NADPH--hemoprotein reductase] + 2 O2 = carvacrol + 2 oxidized [NADPH--hemoprotein reductase] + 3 H2O + 2 H(+). The enzyme catalyses (4S)-limonene + reduced [NADPH--hemoprotein reductase] + O2 = (1S,5R)-carveol + oxidized [NADPH--hemoprotein reductase] + H2O + H(+). The catalysed reaction is (4R)-limonene + reduced [NADPH--hemoprotein reductase] + O2 = (1R,5S)-carveol + oxidized [NADPH--hemoprotein reductase] + H2O + H(+). It catalyses the reaction alpha-terpinene + 2 reduced [NADPH--hemoprotein reductase] + 2 O2 = carvacrol + 2 oxidized [NADPH--hemoprotein reductase] + 3 H2O + 2 H(+). The protein operates within secondary metabolite biosynthesis; terpenoid biosynthesis. Its function is as follows. Involved in the biosynthesis of phenolic monoterpenes natural products thymol and carvacrol which have a broad range of biological activities acting as antimicrobial compounds, insecticides, antioxidants and pharmaceutical agents. Catalyzes the C2-hydroxylation of gamma-terpinene and alpha-terpinene to produce carvacrol. Also mediates the C6-hydroxylation of (4S)-limonene and (4R)-limonene to form carveol. The chain is Cytochrome P450 71D181 from Thymus vulgaris (Thyme).